Consider the following 424-residue polypeptide: Serine--tRNA ligase (424 aa).

Position 231–233 (231–233 (TAE)) interacts with L-serine. 262 to 264 (RAE) is a binding site for ATP. Glu-285 contacts L-serine. 349-352 (EISS) serves as a coordination point for ATP. Ser-385 is an L-serine binding site.

Belongs to the class-II aminoacyl-tRNA synthetase family. Type-1 seryl-tRNA synthetase subfamily. Homodimer. The tRNA molecule binds across the dimer.

The protein resides in the cytoplasm. The catalysed reaction is tRNA(Ser) + L-serine + ATP = L-seryl-tRNA(Ser) + AMP + diphosphate + H(+). The enzyme catalyses tRNA(Sec) + L-serine + ATP = L-seryl-tRNA(Sec) + AMP + diphosphate + H(+). The protein operates within aminoacyl-tRNA biosynthesis; selenocysteinyl-tRNA(Sec) biosynthesis; L-seryl-tRNA(Sec) from L-serine and tRNA(Sec): step 1/1. Functionally, catalyzes the attachment of serine to tRNA(Ser). Is also able to aminoacylate tRNA(Sec) with serine, to form the misacylated tRNA L-seryl-tRNA(Sec), which will be further converted into selenocysteinyl-tRNA(Sec). This chain is Serine--tRNA ligase, found in Geobacillus kaustophilus (strain HTA426).